We begin with the raw amino-acid sequence, 390 residues long: NADH-quinone oxidoreductase subunit D (390 aa).

It belongs to the complex I 49 kDa subunit family. As to quaternary structure, NDH-1 is composed of 14 different subunits. Subunits NuoB, C, D, E, F, and G constitute the peripheral sector of the complex.

The protein resides in the cell inner membrane. The catalysed reaction is a quinone + NADH + 5 H(+)(in) = a quinol + NAD(+) + 4 H(+)(out). In terms of biological role, NDH-1 shuttles electrons from NADH, via FMN and iron-sulfur (Fe-S) centers, to quinones in the respiratory chain. The immediate electron acceptor for the enzyme in this species is believed to be ubiquinone. Couples the redox reaction to proton translocation (for every two electrons transferred, four hydrogen ions are translocated across the cytoplasmic membrane), and thus conserves the redox energy in a proton gradient. This chain is NADH-quinone oxidoreductase subunit D, found in Geotalea uraniireducens (strain Rf4) (Geobacter uraniireducens).